We begin with the raw amino-acid sequence, 695 residues long: Elongation factor G (695 aa).

Residues 8–282 (EKTRNIGIMA…AVLDYLPAPT (275 aa)) form the tr-type G domain. Residues 17 to 24 (AHIDAGKT), 81 to 85 (DTPGH), and 135 to 138 (NKMD) contribute to the GTP site.

This sequence belongs to the TRAFAC class translation factor GTPase superfamily. Classic translation factor GTPase family. EF-G/EF-2 subfamily.

The protein resides in the cytoplasm. Functionally, catalyzes the GTP-dependent ribosomal translocation step during translation elongation. During this step, the ribosome changes from the pre-translocational (PRE) to the post-translocational (POST) state as the newly formed A-site-bound peptidyl-tRNA and P-site-bound deacylated tRNA move to the P and E sites, respectively. Catalyzes the coordinated movement of the two tRNA molecules, the mRNA and conformational changes in the ribosome. The sequence is that of Elongation factor G from Listeria welshimeri serovar 6b (strain ATCC 35897 / DSM 20650 / CCUG 15529 / CIP 8149 / NCTC 11857 / SLCC 5334 / V8).